Reading from the N-terminus, the 81-residue chain is MAGKPVERPFSDILTSIRYWVIHSITIPALFIAGWLFVSTGLAYDVFGSPRPNEYFTEDRQDAPLVTDRFNALEQVKKLSQ.

Residues 21–35 (VIHSITIPALFIAGW) traverse the membrane as a helical segment. A heme-binding site is contributed by His-23.

Belongs to the PsbE/PsbF family. Heterodimer of an alpha subunit and a beta subunit. PSII is composed of 1 copy each of membrane proteins PsbA, PsbB, PsbC, PsbD, PsbE, PsbF, PsbH, PsbI, PsbJ, PsbK, PsbL, PsbM, PsbT, PsbX, PsbY, PsbZ, Psb30/Ycf12, at least 3 peripheral proteins of the oxygen-evolving complex and a large number of cofactors. It forms dimeric complexes. Heme b serves as cofactor.

It localises to the plastid. The protein localises to the chloroplast thylakoid membrane. Functionally, this b-type cytochrome is tightly associated with the reaction center of photosystem II (PSII). PSII is a light-driven water:plastoquinone oxidoreductase that uses light energy to abstract electrons from H(2)O, generating O(2) and a proton gradient subsequently used for ATP formation. It consists of a core antenna complex that captures photons, and an electron transfer chain that converts photonic excitation into a charge separation. This chain is Cytochrome b559 subunit alpha, found in Tetradesmus obliquus (Green alga).